We begin with the raw amino-acid sequence, 817 residues long: Leucine--tRNA ligase (817 aa).

The 'HIGH' region signature appears at 40-50; the sequence is PYPSGKLHMGH. The 'KMSKS' region motif lies at 578–582; sequence KMSKS. K581 lines the ATP pocket.

The protein belongs to the class-I aminoacyl-tRNA synthetase family.

It is found in the cytoplasm. The enzyme catalyses tRNA(Leu) + L-leucine + ATP = L-leucyl-tRNA(Leu) + AMP + diphosphate. The chain is Leucine--tRNA ligase from Caldicellulosiruptor saccharolyticus (strain ATCC 43494 / DSM 8903 / Tp8T 6331).